The chain runs to 92 residues: Acylphosphatase (92 aa).

Positions 5-90 (TYRLVICGLV…GDFVGFQLRE (86 aa)) constitute an Acylphosphatase-like domain. Residues R20 and N38 contribute to the active site.

It belongs to the acylphosphatase family.

The catalysed reaction is an acyl phosphate + H2O = a carboxylate + phosphate + H(+). The polypeptide is Acylphosphatase (acyP) (Albidiferax ferrireducens (strain ATCC BAA-621 / DSM 15236 / T118) (Rhodoferax ferrireducens)).